The following is a 75-amino-acid chain: Probable protein BRICK1-B (75 aa).

Residues 41-72 adopt a coiled-coil conformation; it reads MSCRSRLATLNEKLTTLERRIEYIEARVTKGE.

It belongs to the BRK1 family.

The protein localises to the cytoplasm. Its subcellular location is the cytoskeleton. Functionally, involved in regulation of actin and microtubule organization. Part of a WAVE complex that activates the Arp2/3 complex. The chain is Probable protein BRICK1-B (brk1-b) from Xenopus laevis (African clawed frog).